Reading from the N-terminus, the 463-residue chain is MTKNKSKNKSNNSNISNNNNNNNNNNNNNNNNNNNNNNNNNNNNNNNNNNNNNNNNKNGESQLKNKNKNISENQHIYDKHNHDHSHDHNHDYDDNNEDDEEKEELEHYQLIVSTLLNYSQYSLHWVKDMQDFFHYKLSEDEKKLLPNYNAKMEALARAVLVNSQFLKKIGNEHCNIFSQSSDNSANSERIVDPTNLDHIKIDYFMMDQLKSTIRQLVREWSEEGKLERDQAFEPIKQQLLEIYGHIPFQERSKIRVYSPGAGLGRLCLEIASLGFSSQGIEYSFMMLIVSNFMLNKVEKINEFKIHPYIHQTVNVLRDIDQLRTVTIPDVLSSELLPKNNPALEFSMSAGDFTKNIEENSFDCICTCFFIDTAPNILEYVDCISKILKPGGTWINFGPLLYHHAKKKDSIELSYEQLRYLICKKQFQFKKEEIRDAEYCSNQKSLLRSIYKCQFFVVINNKPT.

2 disordered regions span residues 1 to 64 and 79 to 104; these read MTKN…SQLK and KHNH…EKEE. Over residues 9 to 58 the composition is skewed to low complexity; sequence KSNNSNISNNNNNNNNNNNNNNNNNNNNNNNNNNNNNNNNNNNNNNNNKN. Over residues 79-93 the composition is skewed to basic and acidic residues; sequence KHNHDHSHDHNHDYD. A compositionally biased stretch (acidic residues) spans 94–103; sequence DNNEDDEEKE. Gln-215, Arg-218, Gly-260, Glu-281, Asp-351, Phe-352, and Cys-367 together coordinate S-adenosyl-L-methionine. Asp-371 contributes to the carnosine binding site. Tyr-379 is an S-adenosyl-L-methionine binding site. Positions 402 and 450 each coordinate carnosine.

Belongs to the carnosine N-methyltransferase family.

It catalyses the reaction carnosine + S-adenosyl-L-methionine = anserine + S-adenosyl-L-homocysteine + H(+). Functionally, N-methyltransferase that mediates the formation of anserine (beta-alanyl-N(Pi)-methyl-L-histidine) from carnosine. The chain is Carnosine N-methyltransferase from Dictyostelium discoideum (Social amoeba).